The primary structure comprises 477 residues: Glycogen synthase (477 aa).

K15 lines the ADP-alpha-D-glucose pocket.

This sequence belongs to the glycosyltransferase 1 family. Bacterial/plant glycogen synthase subfamily.

It catalyses the reaction [(1-&gt;4)-alpha-D-glucosyl](n) + ADP-alpha-D-glucose = [(1-&gt;4)-alpha-D-glucosyl](n+1) + ADP + H(+). Its pathway is glycan biosynthesis; glycogen biosynthesis. Synthesizes alpha-1,4-glucan chains using ADP-glucose. This is Glycogen synthase from Streptococcus pneumoniae (strain ATCC 700669 / Spain 23F-1).